Consider the following 299-residue polypeptide: 4-diphosphocytidyl-2-C-methyl-D-erythritol kinase (299 aa).

The active site involves K16. ATP is bound at residue 97–107; that stretch reads PVASGIGGGSA. D140 is a catalytic residue.

It belongs to the GHMP kinase family. IspE subfamily.

It catalyses the reaction 4-CDP-2-C-methyl-D-erythritol + ATP = 4-CDP-2-C-methyl-D-erythritol 2-phosphate + ADP + H(+). The protein operates within isoprenoid biosynthesis; isopentenyl diphosphate biosynthesis via DXP pathway; isopentenyl diphosphate from 1-deoxy-D-xylulose 5-phosphate: step 3/6. In terms of biological role, catalyzes the phosphorylation of the position 2 hydroxy group of 4-diphosphocytidyl-2C-methyl-D-erythritol. The sequence is that of 4-diphosphocytidyl-2-C-methyl-D-erythritol kinase from Roseobacter denitrificans (strain ATCC 33942 / OCh 114) (Erythrobacter sp. (strain OCh 114)).